Reading from the N-terminus, the 505-residue chain is ATP synthase subunit alpha (505 aa).

170–177 (GDRQTGKT) contributes to the ATP binding site.

It belongs to the ATPase alpha/beta chains family. As to quaternary structure, F-type ATPases have 2 components, CF(1) - the catalytic core - and CF(0) - the membrane proton channel. CF(1) has five subunits: alpha(3), beta(3), gamma(1), delta(1), epsilon(1). CF(0) has four main subunits: a(1), b(1), b'(1) and c(9-12).

It is found in the cellular thylakoid membrane. The enzyme catalyses ATP + H2O + 4 H(+)(in) = ADP + phosphate + 5 H(+)(out). Its function is as follows. Produces ATP from ADP in the presence of a proton gradient across the membrane. The alpha chain is a regulatory subunit. The sequence is that of ATP synthase subunit alpha from Prochlorococcus marinus subsp. pastoris (strain CCMP1986 / NIES-2087 / MED4).